Consider the following 209-residue polypeptide: PRA1 family protein A1 (209 aa).

4 consecutive transmembrane segments (helical) span residues 51-73 (LYYY…VLTR), 77-99 (IFAA…GSFS), 144-164 (VFVL…SGLL), and 166-186 (VSVA…LRTP).

The protein belongs to the PRA1 family.

The protein resides in the endoplasmic reticulum membrane. Functionally, may be involved in both secretory and endocytic intracellular trafficking in the endosomal/prevacuolar compartments. The chain is PRA1 family protein A1 (PRA1A1) from Arabidopsis thaliana (Mouse-ear cress).